The chain runs to 747 residues: Fatty acid oxidation complex subunit alpha (747 aa).

An enoyl-CoA hydratase region spans residues 1–197 (MGASATNSVT…KMGLVDDVVP (197 aa)). The interval 313–747 (RAIHRVGVLG…NIDEVTDVAS (435 aa)) is 3-hydroxyacyl-CoA dehydrogenase. The disordered stretch occupies residues 590 to 614 (YLYSNPTKNSSPTKNGNSPAKRNSF). A compositionally biased stretch (polar residues) spans 593-610 (SNPTKNSSPTKNGNSPAK).

It in the N-terminal section; belongs to the enoyl-CoA hydratase/isomerase family. The protein in the central section; belongs to the 3-hydroxyacyl-CoA dehydrogenase family. Heterotetramer of two alpha chains (FadJ) and two beta chains (FadI).

Its subcellular location is the cytoplasm. It carries out the reaction a (3S)-3-hydroxyacyl-CoA = a (2E)-enoyl-CoA + H2O. The catalysed reaction is a 4-saturated-(3S)-3-hydroxyacyl-CoA = a (3E)-enoyl-CoA + H2O. The enzyme catalyses a (3S)-3-hydroxyacyl-CoA + NAD(+) = a 3-oxoacyl-CoA + NADH + H(+). It catalyses the reaction (3S)-3-hydroxybutanoyl-CoA = (3R)-3-hydroxybutanoyl-CoA. It participates in lipid metabolism; fatty acid beta-oxidation. Functionally, catalyzes the formation of a hydroxyacyl-CoA by addition of water on enoyl-CoA. Also exhibits 3-hydroxyacyl-CoA epimerase and 3-hydroxyacyl-CoA dehydrogenase activities. The sequence is that of Fatty acid oxidation complex subunit alpha from Yersinia pseudotuberculosis serotype O:1b (strain IP 31758).